The sequence spans 223 residues: UPF0502 protein Sde_2426 (223 aa).

The protein belongs to the UPF0502 family.

This is UPF0502 protein Sde_2426 from Saccharophagus degradans (strain 2-40 / ATCC 43961 / DSM 17024).